The chain runs to 262 residues: Small ribosomal subunit protein uS2 (262 aa).

Residues Lys223 to Glu262 are disordered. A compositionally biased stretch (low complexity) spans Glu227 to Glu238. Positions Met252–Glu262 are enriched in acidic residues.

The protein belongs to the universal ribosomal protein uS2 family.

This is Small ribosomal subunit protein uS2 from Campylobacter concisus (strain 13826).